The sequence spans 503 residues: 2,3-bisphosphoglycerate-independent phosphoglycerate mutase (503 aa).

Residues D10 and S60 each contribute to the Mn(2+) site. The Phosphoserine intermediate role is filled by S60. Residues H121, 150–151 (RD), R181, R187, 256–259 (RPDR), and K330 contribute to the substrate site. D396, H400, D437, H438, and H455 together coordinate Mn(2+).

It belongs to the BPG-independent phosphoglycerate mutase family. In terms of assembly, monomer. It depends on Mn(2+) as a cofactor.

It catalyses the reaction (2R)-2-phosphoglycerate = (2R)-3-phosphoglycerate. Its pathway is carbohydrate degradation; glycolysis; pyruvate from D-glyceraldehyde 3-phosphate: step 3/5. Functionally, catalyzes the interconversion of 2-phosphoglycerate and 3-phosphoglycerate. The protein is 2,3-bisphosphoglycerate-independent phosphoglycerate mutase of Mycoplasmoides gallisepticum (strain R(low / passage 15 / clone 2)) (Mycoplasma gallisepticum).